The primary structure comprises 479 residues: RAC-gamma serine/threonine-protein kinase (479 aa).

Serine 2 carries the N-acetylserine modification. Residues 5–107 enclose the PH domain; it reads TIVKEGWVQK…WTEAIQAVAD (103 aa). An intrachain disulfide couples cysteine 59 to cysteine 76. A Protein kinase domain is found at 148–405; the sequence is FDYLKLLGKG…AKEIMRHSFF (258 aa). Residues 154–162 and lysine 177 each bind ATP; that span reads LGKGTFGKV. Aspartate 271 acts as the Proton acceptor in catalysis. Cysteine 293 and cysteine 307 form a disulfide bridge. Threonine 302 is a glycosylation site (O-linked (GlcNAc) threonine). Threonine 305 is modified (phosphothreonine; by PDPK1). O-linked (GlcNAc) threonine glycosylation is present at threonine 309. The AGC-kinase C-terminal domain occupies 406-479; sequence SGVNWQDVYD…QFSYSASGRE (74 aa). A Phosphothreonine modification is found at threonine 447. The interval 458–479 is disordered; that stretch reads DCMDNERRPHFPQFSYSASGRE. At serine 472 the chain carries Phosphoserine; by PKC/PRKCZ. A glycan (O-linked (GlcNAc) serine; alternate) is linked at serine 472.

Belongs to the protein kinase superfamily. AGC Ser/Thr protein kinase family. RAC subfamily. Interacts (via PH domain) with TCL1A; this enhances AKT3 phosphorylation and activation. Interacts with TRAF6. Interacts with KCTD20. Interacts with BTBD10. Phosphorylation on Thr-305 and Ser-472 is required for full activity. Phosphorylation of the activation loop at Thr-305 by PDPK1/PDK1 is a prerequisite for full activation. Phosphorylation at Ser-472 by mTORC2 in response to growth factors plays a key role in AKT1 activation by facilitating subsequent phosphorylation of the activation loop by PDPK1/PDK1. Post-translationally, ubiquitinated. When fully phosphorylated and translocated into the nucleus, undergoes 'Lys-48'-polyubiquitination catalyzed by TTC3, leading to its degradation by the proteasome. In terms of processing, O-GlcNAcylation at Thr-302 and Thr-309 inhibits activating phosphorylation at Thr-305 via disrupting the interaction between AKT and PDPK1/PDK1. As to expression, in adult tissues, it is highly expressed in brain, lung and kidney, but weakly in heart, testis and liver. In fetal tissues, it is highly expressed in heart, liver and brain and not at all in kidney.

The protein localises to the nucleus. It is found in the cytoplasm. Its subcellular location is the membrane. The enzyme catalyses L-seryl-[protein] + ATP = O-phospho-L-seryl-[protein] + ADP + H(+). It carries out the reaction L-threonyl-[protein] + ATP = O-phospho-L-threonyl-[protein] + ADP + H(+). Its activity is regulated as follows. Two specific sites, one in the kinase domain (Thr-305) and the other in the C-terminal regulatory region (Ser-472), need to be phosphorylated for its full activation. IGF-1 leads to the activation of AKT3, which may play a role in regulating cell survival. In terms of biological role, AKT3 is one of 3 closely related serine/threonine-protein kinases (AKT1, AKT2 and AKT3) called the AKT kinase, and which regulate many processes including metabolism, proliferation, cell survival, growth and angiogenesis. This is mediated through serine and/or threonine phosphorylation of a range of downstream substrates. Over 100 substrate candidates have been reported so far, but for most of them, no isoform specificity has been reported. AKT3 is the least studied AKT isoform. It plays an important role in brain development and is crucial for the viability of malignant glioma cells. AKT3 isoform may also be the key molecule in up-regulation and down-regulation of MMP13 via IL13. Required for the coordination of mitochondrial biogenesis with growth factor-induced increases in cellular energy demands. Down-regulation by RNA interference reduces the expression of the phosphorylated form of BAD, resulting in the induction of caspase-dependent apoptosis. The chain is RAC-gamma serine/threonine-protein kinase (AKT3) from Homo sapiens (Human).